The primary structure comprises 338 residues: Methionyl-tRNA formyltransferase (338 aa).

Position 110 to 113 (110 to 113) interacts with (6S)-5,6,7,8-tetrahydrofolate; that stretch reads SLLP.

Belongs to the Fmt family.

It catalyses the reaction L-methionyl-tRNA(fMet) + (6R)-10-formyltetrahydrofolate = N-formyl-L-methionyl-tRNA(fMet) + (6S)-5,6,7,8-tetrahydrofolate + H(+). In terms of biological role, attaches a formyl group to the free amino group of methionyl-tRNA(fMet). The formyl group appears to play a dual role in the initiator identity of N-formylmethionyl-tRNA by promoting its recognition by IF2 and preventing the misappropriation of this tRNA by the elongation apparatus. This chain is Methionyl-tRNA formyltransferase, found in Synechococcus sp. (strain CC9605).